We begin with the raw amino-acid sequence, 359 residues long: Ornithine cyclodeaminase (359 aa).

2 residues coordinate L-ornithine: Arg-53 and Lys-77. NAD(+)-binding positions include Thr-92, Arg-120, 147-148, Asp-169, Thr-209, 232-235, Lys-239, and Ser-300; these read AQ and VGGD. Arg-120 serves as a coordination point for L-ornithine. Asp-235 serves as a coordination point for L-ornithine. Residue Asp-235 is the Proton donor/acceptor of the active site. Val-301 serves as a coordination point for L-ornithine.

This sequence belongs to the ornithine cyclodeaminase/mu-crystallin family. NAD(+) serves as cofactor.

The enzyme catalyses L-ornithine = L-proline + NH4(+). It functions in the pathway amino-acid biosynthesis; L-proline biosynthesis; L-proline from L-ornithine: step 1/1. In terms of biological role, catalyzes the conversion of L-ornithine into L-proline with release of ammonia. In Brucella abortus biovar 1 (strain 9-941), this protein is Ornithine cyclodeaminase.